Here is a 476-residue protein sequence, read N- to C-terminus: Replication factor C large subunit (476 aa).

An ATP-binding site is contributed by 43–50; that stretch reads GKPGIGKT. Residues 435–476 form a disordered region; the sequence is LEALRMQEPPVPETPPAAEEQPLEEPQEEKKLAPKQATLDFF.

Belongs to the activator 1 small subunits family. RfcL subfamily. Heteromultimer composed of small subunits (RfcS) and large subunits (RfcL).

In terms of biological role, part of the RFC clamp loader complex which loads the PCNA sliding clamp onto DNA. The chain is Replication factor C large subunit from Methanocorpusculum labreanum (strain ATCC 43576 / DSM 4855 / Z).